We begin with the raw amino-acid sequence, 104 residues long: Phosphocarrier protein HPr (104 aa).

The HPr domain occupies 17-104 (ELSAIFMIRN…EVFNSGFGEL (88 aa)). The active-site Pros-phosphohistidine intermediate is histidine 31.

This sequence belongs to the HPr family.

Its subcellular location is the cytoplasm. Functionally, general (non sugar-specific) component of the phosphoenolpyruvate-dependent sugar phosphotransferase system (sugar PTS). This major carbohydrate active-transport system catalyzes the phosphorylation of incoming sugar substrates concomitantly with their translocation across the cell membrane. The phosphoryl group from phosphoenolpyruvate (PEP) is transferred to the phosphoryl carrier protein HPr by enzyme I. Phospho-HPr then transfers it to the PTS EIIA domain. The sequence is that of Phosphocarrier protein HPr (ptsH) from Chlamydia muridarum (strain MoPn / Nigg).